The following is a 317-amino-acid chain: Putative S-adenosyl-L-methionine-dependent methyltransferase MSMEG_0093 (317 aa).

Residues D134 and 163–164 (DL) contribute to the S-adenosyl-L-methionine site.

It belongs to the UPF0677 family.

Exhibits S-adenosyl-L-methionine-dependent methyltransferase activity. The sequence is that of Putative S-adenosyl-L-methionine-dependent methyltransferase MSMEG_0093 from Mycolicibacterium smegmatis (strain ATCC 700084 / mc(2)155) (Mycobacterium smegmatis).